The following is a 256-amino-acid chain: uncharacterized protein (256 aa).

The signal sequence occupies residues 1-24; it reads MIKRVNKLVLGISLLFLVISITAG. Cysteine 25 carries N-palmitoyl cysteine lipidation. Cysteine 25 carries S-diacylglycerol cysteine lipidation.

The protein belongs to the staphylococcal tandem lipoprotein family.

Its subcellular location is the cell membrane. This is an uncharacterized protein from Staphylococcus aureus.